The sequence spans 218 residues: Ribose-5-phosphate isomerase A (218 aa).

Substrate contacts are provided by residues T27–T30, D80–D83, and K93–G96. Catalysis depends on E102, which acts as the Proton acceptor. A substrate-binding site is contributed by K120.

Belongs to the ribose 5-phosphate isomerase family. In terms of assembly, homodimer.

It catalyses the reaction aldehydo-D-ribose 5-phosphate = D-ribulose 5-phosphate. It participates in carbohydrate degradation; pentose phosphate pathway; D-ribose 5-phosphate from D-ribulose 5-phosphate (non-oxidative stage): step 1/1. Its function is as follows. Catalyzes the reversible conversion of ribose-5-phosphate to ribulose 5-phosphate. The protein is Ribose-5-phosphate isomerase A of Thiobacillus denitrificans (strain ATCC 25259 / T1).